The primary structure comprises 339 residues: Glyoxylate reductase (339 aa).

Residues 157–160 (LGRI) and 239–241 (TAR) each bind NADP(+). Active-site residues include R241 and E270. H289 functions as the Proton donor in the catalytic mechanism. 289-291 (HIA) is an NADP(+) binding site.

This sequence belongs to the D-isomer specific 2-hydroxyacid dehydrogenase family. GyaR subfamily. In terms of assembly, homodimer.

It is found in the cytoplasm. It catalyses the reaction glycolate + NAD(+) = glyoxylate + NADH + H(+). This is Glyoxylate reductase from Thermofilum pendens (strain DSM 2475 / Hrk 5).